A 208-amino-acid chain; its full sequence is 3-demethoxyubiquinol 3-hydroxylase (208 aa).

Residues Glu57, Glu87, His90, Glu139, Glu171, and His174 each coordinate Fe cation.

It belongs to the COQ7 family. The cofactor is Fe cation.

The protein localises to the cell membrane. It carries out the reaction a 5-methoxy-2-methyl-3-(all-trans-polyprenyl)benzene-1,4-diol + AH2 + O2 = a 3-demethylubiquinol + A + H2O. Its pathway is cofactor biosynthesis; ubiquinone biosynthesis. Catalyzes the hydroxylation of 2-nonaprenyl-3-methyl-6-methoxy-1,4-benzoquinol during ubiquinone biosynthesis. The sequence is that of 3-demethoxyubiquinol 3-hydroxylase from Verminephrobacter eiseniae (strain EF01-2).